Reading from the N-terminus, the 119-residue chain is Large ribosomal subunit protein uL18 (119 aa).

The segment at 1–26 is disordered; that stretch reads MGQNDKAARRQKIKLRSKTRGQGTAA. The span at 9–19 shows a compositional bias: basic residues; it reads RRQKIKLRSKT.

The protein belongs to the universal ribosomal protein uL18 family. Part of the 50S ribosomal subunit; part of the 5S rRNA/L5/L18/L25 subcomplex. Contacts the 5S and 23S rRNAs.

Functionally, this is one of the proteins that bind and probably mediate the attachment of the 5S RNA into the large ribosomal subunit, where it forms part of the central protuberance. The chain is Large ribosomal subunit protein uL18 from Prosthecochloris aestuarii (strain DSM 271 / SK 413).